The following is a 475-amino-acid chain: Putative aldehyde dehydrogenase (475 aa).

NAD(+) is bound by residues 146 to 147 (WN) and 223 to 224 (GS). E245 acts as the Proton acceptor in catalysis. L246 serves as a coordination point for NAD(+). The Nucleophile role is filled by C279. E379 is a binding site for NAD(+).

It belongs to the aldehyde dehydrogenase family.

The catalysed reaction is an aldehyde + NAD(+) + H2O = a carboxylate + NADH + 2 H(+). The polypeptide is Putative aldehyde dehydrogenase (Staphylococcus aureus (strain bovine RF122 / ET3-1)).